The chain runs to 432 residues: Nuclear pore complex-interacting protein family member B9 (432 aa).

Disordered regions lie at residues 260–280 (RMGR…NSLS) and 353–420 (SPLP…LRTR). Over residues 270–280 (QQHSITDNSLS) the composition is skewed to polar residues. The span at 374–402 (EVEKPPKPKRWRVDEVEQSPKPKRQREAE) shows a compositional bias: basic and acidic residues. The segment covering 408–420 (KPKRRRLSKLRTR) has biased composition (basic residues).

This sequence belongs to the NPIP family.

The sequence is that of Nuclear pore complex-interacting protein family member B9 (NPIPB9) from Homo sapiens (Human).